The primary structure comprises 341 residues: Dehydration-responsive element-binding protein 2C (341 aa).

The Nuclear localization signal signature appears at 8–48 (RKRKSRGTRDVAEILRQWREYNEQIEAESCIDGGGPKSIRK). Residues 36-63 (SCIDGGGPKSIRKPPPKGSRKGCMKGKG) form a disordered region. Over residues 45–59 (SIRKPPPKGSRKGCM) the composition is skewed to basic residues. Positions 71–128 (DYRGVRQRRWGKWVAEIREPDGGARLWLGTFSSSYEAALAYDEAAKAIYGQSARLNLP) form a DNA-binding region, AP2/ERF.

The protein belongs to the AP2/ERF transcription factor family. ERF subfamily.

It localises to the nucleus. Its function is as follows. Transcriptional activator that binds specifically to the DNA sequence 5'-[AG]CCGAC-3'. Binding to the C-repeat/DRE element mediates high salinity- and abscisic acid-inducible transcription. This is Dehydration-responsive element-binding protein 2C (DREB2C) from Arabidopsis thaliana (Mouse-ear cress).